We begin with the raw amino-acid sequence, 102 residues long: NADH-quinone oxidoreductase subunit K (102 aa).

A run of 3 helical transmembrane segments spans residues 6-26 (LIGM…GVLA), 30-50 (ILFQ…AFVA), and 63-83 (MLIL…ALLL).

This sequence belongs to the complex I subunit 4L family. As to quaternary structure, NDH-1 is composed of 14 different subunits. Subunits NuoA, H, J, K, L, M, N constitute the membrane sector of the complex.

It is found in the cell inner membrane. It carries out the reaction a quinone + NADH + 5 H(+)(in) = a quinol + NAD(+) + 4 H(+)(out). Functionally, NDH-1 shuttles electrons from NADH, via FMN and iron-sulfur (Fe-S) centers, to quinones in the respiratory chain. The immediate electron acceptor for the enzyme in this species is believed to be ubiquinone. Couples the redox reaction to proton translocation (for every two electrons transferred, four hydrogen ions are translocated across the cytoplasmic membrane), and thus conserves the redox energy in a proton gradient. The protein is NADH-quinone oxidoreductase subunit K of Rhodopseudomonas palustris (strain HaA2).